The primary structure comprises 130 residues: Small ribosomal subunit protein uS9 (130 aa).

The protein belongs to the universal ribosomal protein uS9 family.

This is Small ribosomal subunit protein uS9 from Pasteurella multocida (strain Pm70).